The chain runs to 270 residues: Putative phosphatase YxeH (270 aa).

The active-site Nucleophile is the aspartate 8. Position 8 (aspartate 8) interacts with Mg(2+). Methionine 9 lines the phosphate pocket. Aspartate 10 provides a ligand contact to Mg(2+). Residues 42-43 and lysine 196 each bind phosphate; that span reads TG. Aspartate 219 contacts Mg(2+). Asparagine 222 lines the phosphate pocket.

It belongs to the HAD-like hydrolase superfamily. Cof family. Requires Mg(2+) as cofactor.

This chain is Putative phosphatase YxeH (yxeH), found in Bacillus subtilis (strain 168).